We begin with the raw amino-acid sequence, 296 residues long: Glycerol-3-phosphate dehydrogenase [NAD(P)+] (296 aa).

NADPH is bound by residues W12, R31, and K80. K80, G108, and S110 together coordinate sn-glycerol 3-phosphate. Position 112 (A112) interacts with NADPH. Residues K162, D215, S225, R226, and N227 each contribute to the sn-glycerol 3-phosphate site. Catalysis depends on K162, which acts as the Proton acceptor. Residue R226 coordinates NADPH. V250 and E252 together coordinate NADPH.

It belongs to the NAD-dependent glycerol-3-phosphate dehydrogenase family.

Its subcellular location is the cytoplasm. It catalyses the reaction sn-glycerol 3-phosphate + NAD(+) = dihydroxyacetone phosphate + NADH + H(+). The enzyme catalyses sn-glycerol 3-phosphate + NADP(+) = dihydroxyacetone phosphate + NADPH + H(+). The protein operates within membrane lipid metabolism; glycerophospholipid metabolism. Functionally, catalyzes the reduction of the glycolytic intermediate dihydroxyacetone phosphate (DHAP) to sn-glycerol 3-phosphate (G3P), the key precursor for phospholipid synthesis. The sequence is that of Glycerol-3-phosphate dehydrogenase [NAD(P)+] from Sulfurimonas denitrificans (strain ATCC 33889 / DSM 1251) (Thiomicrospira denitrificans (strain ATCC 33889 / DSM 1251)).